The following is a 191-amino-acid chain: NAD(P)H-dependent FMN reductase LOT6 (191 aa).

FMN contacts are provided by residues Arg11, Gln94–Trp97, and Tyr124.

Homodimer.

It is found in the cytoplasm. It localises to the nucleus. It catalyses the reaction FMNH2 + NADP(+) = FMN + NADPH + 2 H(+). The catalysed reaction is FMNH2 + NAD(+) = FMN + NADH + 2 H(+). Its function is as follows. Has several reductase activities that are NAD(P)H-dependent and involve FMN as a cofactor, ferricyanide being the best substrate for reduction. May be involved in ferric iron assimilation. This chain is NAD(P)H-dependent FMN reductase LOT6 (LOT6), found in Saccharomyces cerevisiae (strain ATCC 204508 / S288c) (Baker's yeast).